An 89-amino-acid chain; its full sequence is Small ribosomal subunit protein uS14 (89 aa).

It belongs to the universal ribosomal protein uS14 family. In terms of assembly, part of the 30S ribosomal subunit. Contacts proteins S3 and S10.

In terms of biological role, binds 16S rRNA, required for the assembly of 30S particles and may also be responsible for determining the conformation of the 16S rRNA at the A site. This is Small ribosomal subunit protein uS14 from Phytoplasma australiense.